Reading from the N-terminus, the 679-residue chain is uncharacterized protein (679 aa).

12 helical membrane-spanning segments follow: residues 23-41 (YALR…AYYL), 46-65 (PYWA…GGVI), 72-90 (IAGS…GHTL), 94-113 (WLFL…ACAH), 120-142 (YAFQ…IVEI), 157-179 (IVGI…GTAL), 362-381 (WSGV…SIGA), 385-404 (SGPG…SIVA), 411-433 (SLLM…GLMV), 438-455 (LWQF…MQLL), 462-481 (LAGL…AVTN), and 496-515 (AKIV…RPGS).

This sequence belongs to the aromatic acid exporter ArAE (TC 2.A.85) family.

The protein localises to the cell membrane. This is an uncharacterized protein from Salmonella typhimurium (strain LT2 / SGSC1412 / ATCC 700720).